A 174-amino-acid polypeptide reads, in one-letter code: Small ribosomal subunit protein uS5 (174 aa).

An S5 DRBM domain is found at 19 to 82 (LREKMIAINR…EEARRNMTKI (64 aa)).

It belongs to the universal ribosomal protein uS5 family. In terms of assembly, part of the 30S ribosomal subunit. Contacts proteins S4 and S8.

With S4 and S12 plays an important role in translational accuracy. Functionally, located at the back of the 30S subunit body where it stabilizes the conformation of the head with respect to the body. The sequence is that of Small ribosomal subunit protein uS5 from Albidiferax ferrireducens (strain ATCC BAA-621 / DSM 15236 / T118) (Rhodoferax ferrireducens).